A 273-amino-acid chain; its full sequence is 4-hydroxy-tetrahydrodipicolinate reductase (273 aa).

NAD(+) contacts are provided by residues 12 to 17 and glutamate 38; that span reads GAGGRM. Arginine 39 serves as a coordination point for NADP(+). NAD(+) is bound by residues 102 to 104 and 126 to 129; these read GTT and AANF. Histidine 159 acts as the Proton donor/acceptor in catalysis. Histidine 160 lines the (S)-2,3,4,5-tetrahydrodipicolinate pocket. The Proton donor role is filled by lysine 163. 169–170 serves as a coordination point for (S)-2,3,4,5-tetrahydrodipicolinate; it reads GT.

It belongs to the DapB family. In terms of assembly, homotetramer.

Its subcellular location is the cytoplasm. It carries out the reaction (S)-2,3,4,5-tetrahydrodipicolinate + NAD(+) + H2O = (2S,4S)-4-hydroxy-2,3,4,5-tetrahydrodipicolinate + NADH + H(+). It catalyses the reaction (S)-2,3,4,5-tetrahydrodipicolinate + NADP(+) + H2O = (2S,4S)-4-hydroxy-2,3,4,5-tetrahydrodipicolinate + NADPH + H(+). It functions in the pathway amino-acid biosynthesis; L-lysine biosynthesis via DAP pathway; (S)-tetrahydrodipicolinate from L-aspartate: step 4/4. In terms of biological role, catalyzes the conversion of 4-hydroxy-tetrahydrodipicolinate (HTPA) to tetrahydrodipicolinate. This is 4-hydroxy-tetrahydrodipicolinate reductase from Shigella boydii serotype 4 (strain Sb227).